Here is an 88-residue protein sequence, read N- to C-terminus: Small ribosomal subunit protein bS20 (88 aa).

It belongs to the bacterial ribosomal protein bS20 family.

In terms of biological role, binds directly to 16S ribosomal RNA. The sequence is that of Small ribosomal subunit protein bS20 from Maricaulis maris (strain MCS10) (Caulobacter maris).